The primary structure comprises 265 residues: Flagellar brake protein YcgR (265 aa).

The PilZ domain occupies 135-252; it reads QRRESYRLET…DETIQRYIFR (118 aa).

The protein belongs to the YcgR family. Monomer. Interacts with the flagellar basal bodies.

The protein localises to the bacterial flagellum basal body. Acts as a flagellar brake, regulating swimming and swarming in a bis-(3'-5') cyclic diguanylic acid (c-di-GMP)-dependent manner. Binds 1 c-di-GMP dimer per subunit. Increasing levels of c-di-GMP lead to decreased motility. The sequence is that of Flagellar brake protein YcgR from Xanthomonas campestris pv. campestris (strain B100).